A 331-amino-acid chain; its full sequence is Thiamine-monophosphate kinase (331 aa).

Mg(2+) is bound by residues Asp-43, Thr-59, Thr-60, and Asp-61. Residue His-68 coordinates substrate. Mg(2+) contacts are provided by Asp-90, Asp-138, and Asp-231. 137–138 is an ATP binding site; sequence GD. ATP is bound at residue Ser-233. Asp-234 contacts Mg(2+). Residues Glu-284 and Trp-328 each coordinate substrate.

This sequence belongs to the thiamine-monophosphate kinase family.

It catalyses the reaction thiamine phosphate + ATP = thiamine diphosphate + ADP. It participates in cofactor biosynthesis; thiamine diphosphate biosynthesis; thiamine diphosphate from thiamine phosphate: step 1/1. Catalyzes the ATP-dependent phosphorylation of thiamine-monophosphate (TMP) to form thiamine-pyrophosphate (TPP), the active form of vitamin B1. This Corynebacterium glutamicum (strain ATCC 13032 / DSM 20300 / JCM 1318 / BCRC 11384 / CCUG 27702 / LMG 3730 / NBRC 12168 / NCIMB 10025 / NRRL B-2784 / 534) protein is Thiamine-monophosphate kinase.